The primary structure comprises 348 residues: UDP-N-acetyl-alpha-D-glucosaminouronate 4-epimerase (348 aa).

Positions 26, 27, 46, 50, 51, 77, 78, 97, 165, 169, and 195 each coordinate NAD(+). Tyr165 functions as the Proton acceptor in the catalytic mechanism.

It belongs to the NAD(P)-dependent epimerase/dehydratase family. Homodimer. NAD(+) serves as cofactor.

It carries out the reaction UDP-2-acetamido-2-deoxy-alpha-D-glucuronate = UDP-2-acetamido-2-deoxy-alpha-D-galacturonate. It catalyses the reaction UDP-N-acetyl-alpha-D-glucosamine = UDP-N-acetyl-alpha-D-galactosamine. It participates in capsule biogenesis; capsule polysaccharide biosynthesis. Its pathway is glycan metabolism; Vi-antigen biosynthesis. In terms of biological role, epimerase required for the biosynthesis of the capsular polysaccharide, commonly referred as the Vi antigen, an important virulence factor. Catalyzes the reversible epimerization of UDP-N-acetylglucosaminuronic acid (UDP-GlcNAcA) to UDP-N-acetylgalactosaminuronic acid (UDP-GalNAcA). Also catalyzes, with lower efficiency, the reversible epimerization of UDP-N-acetylglucosamine (UDP-GlcNAc) to UDP-N-acetylgalactosamine (UDP-GalNAc). Cannot use UDP-glucose (UDP-Glc) and UDP-galactose (UDP-Gal) as substrates. The sequence is that of UDP-N-acetyl-alpha-D-glucosaminouronate 4-epimerase from Salmonella typhi.